A 517-amino-acid polypeptide reads, in one-letter code: Crotonobetaine/carnitine--CoA ligase (517 aa).

This sequence belongs to the ATP-dependent AMP-binding enzyme family.

It carries out the reaction 4-(trimethylamino)butanoate + ATP + CoA = 4-(trimethylamino)butanoyl-CoA + AMP + diphosphate. The enzyme catalyses crotonobetaine + ATP + CoA = crotonobetainyl-CoA + AMP + diphosphate. It catalyses the reaction (R)-carnitine + ATP + CoA = (R)-carnitinyl-CoA + AMP + diphosphate. It functions in the pathway amine and polyamine metabolism; carnitine metabolism. In terms of biological role, catalyzes the transfer of CoA to carnitine, generating the initial carnitinyl-CoA needed for the CaiB reaction cycle. Also has activity toward crotonobetaine and gamma-butyrobetaine. The polypeptide is Crotonobetaine/carnitine--CoA ligase (Escherichia coli O9:H4 (strain HS)).